The primary structure comprises 124 residues: Small ribosomal subunit protein uS12 (124 aa).

At D89 the chain carries 3-methylthioaspartic acid.

The protein belongs to the universal ribosomal protein uS12 family. As to quaternary structure, part of the 30S ribosomal subunit. Contacts proteins S8 and S17. May interact with IF1 in the 30S initiation complex.

Functionally, with S4 and S5 plays an important role in translational accuracy. Its function is as follows. Interacts with and stabilizes bases of the 16S rRNA that are involved in tRNA selection in the A site and with the mRNA backbone. Located at the interface of the 30S and 50S subunits, it traverses the body of the 30S subunit contacting proteins on the other side and probably holding the rRNA structure together. The combined cluster of proteins S8, S12 and S17 appears to hold together the shoulder and platform of the 30S subunit. The chain is Small ribosomal subunit protein uS12 from Acinetobacter baumannii (strain AB307-0294).